Here is a 487-residue protein sequence, read N- to C-terminus: Probable Xaa-Pro aminopeptidase AFUB_014460 (487 aa).

Mn(2+)-binding residues include D267, D278, E416, and E455.

Belongs to the peptidase M24B family. Mn(2+) is required as a cofactor.

The enzyme catalyses Release of any N-terminal amino acid, including proline, that is linked to proline, even from a dipeptide or tripeptide.. Catalyzes the removal of a penultimate prolyl residue from the N-termini of peptides. The polypeptide is Probable Xaa-Pro aminopeptidase AFUB_014460 (Aspergillus fumigatus (strain CBS 144.89 / FGSC A1163 / CEA10) (Neosartorya fumigata)).